A 211-amino-acid chain; its full sequence is tRNA (guanine-N(7)-)-methyltransferase (211 aa).

S-adenosyl-L-methionine contacts are provided by Glu-43, Asp-68, Asn-95, and Asn-117. Lys-121 contributes to the substrate binding site. The segment at Arg-123 to Arg-128 is interaction with RNA. Residues Asp-153 and Thr-190–Glu-193 each bind substrate.

This sequence belongs to the class I-like SAM-binding methyltransferase superfamily. TrmB family.

The enzyme catalyses guanosine(46) in tRNA + S-adenosyl-L-methionine = N(7)-methylguanosine(46) in tRNA + S-adenosyl-L-homocysteine. It functions in the pathway tRNA modification; N(7)-methylguanine-tRNA biosynthesis. Catalyzes the formation of N(7)-methylguanine at position 46 (m7G46) in tRNA. This is tRNA (guanine-N(7)-)-methyltransferase from Clostridium tetani (strain Massachusetts / E88).